We begin with the raw amino-acid sequence, 274 residues long: Glutamate--cysteine ligase regulatory subunit (274 aa).

N6-acetyllysine is present on Lys-263.

It belongs to the aldo/keto reductase family. Glutamate--cysteine ligase light chain subfamily. As to quaternary structure, heterodimer of a catalytic heavy chain and a regulatory light chain. In terms of tissue distribution, in all tissues examined. Highest levels in skeletal muscle.

The protein operates within sulfur metabolism; glutathione biosynthesis; glutathione from L-cysteine and L-glutamate: step 1/2. The sequence is that of Glutamate--cysteine ligase regulatory subunit (GCLM) from Homo sapiens (Human).